The following is a 156-amino-acid chain: MSRRSTAEKETAKSDPIYRNRLVNMLVNRILRHGKKSLAYRILYRAMKNIQQKTEKNPLSVLRQAIRGVTPNVTVKARRVGGSTYQVPIEIRSTQGKALAIRWSLGASRKRPPGRNMAFKLSYELMDAARENGNAIRKKEEAHRMAEANRAFAHFR.

The protein belongs to the universal ribosomal protein uS7 family. In terms of assembly, part of the 30S ribosomal subunit.

The protein resides in the plastid. The protein localises to the chloroplast. Its function is as follows. One of the primary rRNA binding proteins, it binds directly to 16S rRNA where it nucleates assembly of the head domain of the 30S subunit. The sequence is that of Small ribosomal subunit protein uS7c (rps7) from Bowenia serrulata (Byfield fern).